A 481-amino-acid chain; its full sequence is Chromosomal replication initiator protein DnaA (481 aa).

A domain I, interacts with DnaA modulators region spans residues 1 to 71 (MTDLSAFWPQ…ETFAEDILGR (71 aa)). The segment at 71–143 (RPVTIELRIG…PAIGGGHEST (73 aa)) is domain II. The span at 86 to 96 (ASAPAAASPRS) shows a compositional bias: low complexity. The interval 86–110 (ASAPAAASPRSPGRPAPAPVAATPT) is disordered. Positions 144-361 (RLNPAFTFES…GALKRVVAYS (218 aa)) are domain III, AAA+ region. Gly-189, Gly-191, Lys-192, and Thr-193 together coordinate ATP. The segment at 362–481 (RFSNQPISLD…YAALQQMLRN (120 aa)) is domain IV, binds dsDNA.

This sequence belongs to the DnaA family. In terms of assembly, oligomerizes as a right-handed, spiral filament on DNA at oriC.

It localises to the cytoplasm. Its function is as follows. Plays an essential role in the initiation and regulation of chromosomal replication. ATP-DnaA binds to the origin of replication (oriC) to initiate formation of the DNA replication initiation complex once per cell cycle. Binds the DnaA box (a 9 base pair repeat at the origin) and separates the double-stranded (ds)DNA. Forms a right-handed helical filament on oriC DNA; dsDNA binds to the exterior of the filament while single-stranded (ss)DNA is stabiized in the filament's interior. The ATP-DnaA-oriC complex binds and stabilizes one strand of the AT-rich DNA unwinding element (DUE), permitting loading of DNA polymerase. After initiation quickly degrades to an ADP-DnaA complex that is not apt for DNA replication. Binds acidic phospholipids. The sequence is that of Chromosomal replication initiator protein DnaA from Laribacter hongkongensis (strain HLHK9).